Here is a 451-residue protein sequence, read N- to C-terminus: tRNA modification GTPase MnmE (451 aa).

Positions 28, 85, and 124 each coordinate (6S)-5-formyl-5,6,7,8-tetrahydrofolate. In terms of domain architecture, TrmE-type G spans 220-373 (GLYTVLVGPP…LKTRLRTLLL (154 aa)). A K(+)-binding site is contributed by Asn-230. Residues 230-235 (NVGKSS), 249-255 (TDVPGTT), and 274-277 (DTAG) each bind GTP. Ser-234 contacts Mg(2+). K(+) contacts are provided by Thr-249, Val-251, and Thr-254. Thr-255 provides a ligand contact to Mg(2+). Lys-451 lines the (6S)-5-formyl-5,6,7,8-tetrahydrofolate pocket.

This sequence belongs to the TRAFAC class TrmE-Era-EngA-EngB-Septin-like GTPase superfamily. TrmE GTPase family. Homodimer. Heterotetramer of two MnmE and two MnmG subunits. Requires K(+) as cofactor.

It is found in the cytoplasm. Exhibits a very high intrinsic GTPase hydrolysis rate. Involved in the addition of a carboxymethylaminomethyl (cmnm) group at the wobble position (U34) of certain tRNAs, forming tRNA-cmnm(5)s(2)U34. The sequence is that of tRNA modification GTPase MnmE from Xylella fastidiosa (strain Temecula1 / ATCC 700964).